A 230-amino-acid chain; its full sequence is PKHD-type hydroxylase XF_0598 (230 aa).

The Fe2OG dioxygenase domain occupies 78-182 (RTLPPRFNCY…RIASFFWVQS (105 aa)). Fe cation is bound by residues His96, Asp98, and His163. Arg173 is a binding site for 2-oxoglutarate.

Fe(2+) is required as a cofactor. L-ascorbate serves as cofactor.

In Xylella fastidiosa (strain 9a5c), this protein is PKHD-type hydroxylase XF_0598.